An 850-amino-acid chain; its full sequence is Pentatricopeptide repeat-containing protein At5g16860 (850 aa).

PPR repeat units follow at residues 58–88 (TLNLTSHLISTYISVGCLSHAVSLLRRFPPS), 91–125 (GVYHWNSLIRSYGDNGCANKCLYLFGLMHSLSWTP), 126–160 (DNYTFPFVFKACGEISSVRCGESAHALSLVTGFIS), 161–191 (NVFVGNALVAMYSRCRSLSDARKVFDEMSVW), 192–227 (DVVSWNSIIESYAKLGKPKVALEMFSRMTNEFGCRP), 228–262 (DNITLVNVLPPCASLGTHSLGKQLHCFAVTSEMIQ), 263–293 (NMFVGNCLVDMYAKCGMMDEANTVFSNMSVK), 294–328 (DVVSWNAMVAGYSQIGRFEDAVRLFEKMQEEKIKM), 329–363 (DVVTWSAAISGYAQRGLGYEALGVCRQMLSSGIKP), 364–398 (NEVTLISVLSGCASVGALMHGKEIHCYAIKYPIDL), 406–436 (ENMVINQLIDMYAKCKKVDTARAMFDSLSPK), 439–473 (DVVTWTVMIGGYSQHGDANKALELLSEMFEEDCQT), 476–510 (NAFTISCALVACASLAALRIGKQIHAYALRNQQNA), 512–542 (PLFVSNCLIDMYAKCGSISDARLVFDNMMAK), 543–577 (NEVTWTSLMTGYGMHGYGEEALGIFDEMRRIGFKL), 578–608 (DGVTLLVVLYACSHSGMIDQGMEYFNRMKTV), and 614–644 (GPEHYACLVDLLGRAGRLNAALRLIEEMPME). The segment at 649 to 724 (VWVAFLSCCR…RPGCSWVEGI (76 aa)) is type E motif. Positions 725 to 755 (KGTTTFFVGDKTHPHAKEIYQVLLDHMQRIK) are type E(+) motif. The type DYW motif stretch occupies residues 756–850 (DIGYVPETGF…NGSCSCKGYW (95 aa)).

It belongs to the PPR family. PCMP-H subfamily.

The protein is Pentatricopeptide repeat-containing protein At5g16860 (PCMP-H92) of Arabidopsis thaliana (Mouse-ear cress).